Consider the following 420-residue polypeptide: 2,3-dimethylmalate dehydratase large subunit (420 aa).

Positions 301, 361, and 364 each coordinate [4Fe-4S] cluster.

The protein belongs to the aconitase/IPM isomerase family. LeuC type 2 subfamily. In terms of assembly, heterodimer of a large and a small subunit. It depends on [4Fe-4S] cluster as a cofactor.

It catalyses the reaction (2R,3S)-2,3-dimethylmalate = dimethylmaleate + H2O. The protein operates within cofactor degradation; nicotinate degradation; propanoate and pyruvate from 6-hydroxynicotinate: step 7/8. This is 2,3-dimethylmalate dehydratase large subunit (dmdA) from Eubacterium barkeri (Clostridium barkeri).